The chain runs to 238 residues: MRVAILRITERSWEINTMLPWKSSKKFSNHSIASTSKWLVHQVANFVTWHETAKKCGAKIRVLPILDNWLIDENVLISTLSEKTKLVALNFVSNVTGTEQPIKRLIQLIRKHSHALVLVDAAQAISHIKIDLQDLDADFLAFSAHKIYGPNGLGVLTGKLTALSQLQPLFFGGKMVERVSNNRITFAELPYRLEAGTPNIAGVIGFNAVLDWLQKWDFTAAEQHAISLAESVKVRRNF.

Lys-146 bears the N6-(pyridoxal phosphate)lysine mark.

This sequence belongs to the class-V pyridoxal-phosphate-dependent aminotransferase family. Csd subfamily.

This Haemophilus influenzae (strain ATCC 51907 / DSM 11121 / KW20 / Rd) protein is Putative csd-like protein HI_1343.